Here is a 309-residue protein sequence, read N- to C-terminus: MAPKVSDSVEQLRAAGNQNFRNGQYGEASALYERALRLLQARGSADPEEESVLYSNRAACYLKDGNCTDCIKDCTSALALVPFSIKPLLRRASAYEALEKYALAYVDYKTVLQIDNSVASALEGINRITRALMDSLGPEWRLKLPPIPVVPVSAQKRWNSLPSDNHKETAKTKSKEATATKSRVPSAGDVERAKALKEEGNDLVKKGNHKKAIEKYSESLLCSSLESATYSNRALCHLVLKQYKEAVKDCTEALKLDGKNVKAFYRRAQAYKALKDYKSSLSDISSLLQIEPRNGPAQKLRQEVNQNMN.

A Phosphoserine modification is found at Ser8. 3 TPR repeats span residues 9–42 (VEQLRAAGNQNFRNGQYGEASALYERALRLLQAR), 51–84 (SVLYSNRAACYLKDGNCTDCIKDCTSALALVPFS), and 85–118 (IKPLLRRASAYEALEKYALAYVDYKTVLQIDNSV). Positions 158 to 189 (WNSLPSDNHKETAKTKSKEATATKSRVPSAGD) are disordered. At Ser160 the chain carries Phosphoserine. Over residues 164–178 (DNHKETAKTKSKEAT) the composition is skewed to basic and acidic residues. Ser186 carries the post-translational modification Phosphoserine. 3 TPR repeats span residues 193–226 (AKALKEEGNDLVKKGNHKKAIEKYSESLLCSSLE), 227–260 (SATYSNRALCHLVLKQYKEAVKDCTEALKLDGKN), and 261–294 (VKAFYRRAQAYKALKDYKSSLSDISSLLQIEPRN). Residue Lys197 forms a Glycyl lysine isopeptide (Lys-Gly) (interchain with G-Cter in SUMO2) linkage.

It belongs to the Tom34 family. As to quaternary structure, interacts with HSP90A, VCP, ATP6V1D, KIAA0665, AMPK, and DMAP1 through its TPR repeat. In terms of tissue distribution, isoform 1 is ubiquitously expressed while isoform 2 is expressed only in mature testicular germ cells. Isoform 1 is expressed in all testicular cells. Isoform 2 is highly expressed in early to late pachytene cells but expression is significantly decreased in round spermatid cells.

Its subcellular location is the cytoplasm. The protein localises to the mitochondrion outer membrane. Functionally, plays a role in the import of cytosolically synthesized preproteins into mitochondria. Binds the mature portion of precursor proteins. Interacts with cellular components, and possesses weak ATPase activity. May be a chaperone-like protein that helps to keep newly synthesized precursors in an unfolded import compatible state. In Mus musculus (Mouse), this protein is Mitochondrial import receptor subunit TOM34 (Tomm34).